Consider the following 762-residue polypeptide: 5-methyltetrahydropteroyltriglutamate--homocysteine methyltransferase (762 aa).

5-methyltetrahydropteroyltri-L-glutamate-binding positions include 18–21 and Lys112; that span reads REWK. L-homocysteine contacts are provided by residues 435–437 and Glu488; that span reads IGS. Residues 435–437 and Glu488 each bind L-methionine; that span reads IGS. Residues 519-520 and Trp565 contribute to the 5-methyltetrahydropteroyltri-L-glutamate site; that span reads RC. Asp603 is a binding site for L-homocysteine. Asp603 contacts L-methionine. Glu609 contacts 5-methyltetrahydropteroyltri-L-glutamate. Positions 645, 647, and 669 each coordinate Zn(2+). The active-site Proton donor is His698. Cys719 carries the post-translational modification S-bacillithiol cysteine disulfide. Cys730 serves as a coordination point for Zn(2+).

The protein belongs to the vitamin-B12 independent methionine synthase family. Requires Zn(2+) as cofactor. In terms of processing, in response to oxidative stress, Cys-719 can react with bacillithiol (BSH) to form mixed disulfides. S-bacillithiolation leads to loss of catalytic activity and methionine auxotrophy.

It catalyses the reaction 5-methyltetrahydropteroyltri-L-glutamate + L-homocysteine = tetrahydropteroyltri-L-glutamate + L-methionine. Its pathway is amino-acid biosynthesis; L-methionine biosynthesis via de novo pathway; L-methionine from L-homocysteine (MetE route): step 1/1. Its function is as follows. Catalyzes the transfer of a methyl group from 5-methyltetrahydrofolate to homocysteine resulting in methionine formation. This is 5-methyltetrahydropteroyltriglutamate--homocysteine methyltransferase from Bacillus subtilis (strain 168).